Here is a 479-residue protein sequence, read N- to C-terminus: MPQFPWKDNDAELSPLEAFLAEWDDPEAEEEDFRNDFFRGSEGRRKKAAVMLMAIWTVVITLHYWVWGSWLVWALTGALSLQALRLMKATPEEAPPLLTGDASTVPYPQVCLMVAAKNEEAVIGKIVQQLCSLDYPGDRHEVWIVDDNSTDRTPAILDQLRQQYPQLKVVRRGAGASGGKSGALNEVLAQTQGDIVGVFDADANVPKDLLRRVVPYFASPTFGALQVRKAIANEAVNFWTRGQGAEMALDAYFQQQRIVTGGIGELRGNGQFVARQALDAVGGWNEQTITDDLDLTIRLHLHQWKVGILVNPPVEEEGVTTAIALWHQRNRWAEGGYQRYLDYWRWICTQPMGWKKKLDLFSFLLMQYLLPTAAVPDLLMALWQRRFPLLTPLSYLAIGFSCWGMYYGLKRLTPSEGESPWQQMPALLARTIGGTIYMFHWLIIMPAVTARMAFRPKRLKWVKTVHGAATEDALELKQS.

4 helical membrane passes run 48 to 68 (AAVM…WVWG), 363 to 383 (FLLM…MALW), 389 to 409 (LLTP…YYGL), and 428 to 448 (LART…MPAV).

It belongs to the glycosyltransferase 2 family. Requires Mg(2+) as cofactor.

It is found in the membrane. It catalyses the reaction a 1,2-diacyl-sn-glycerol + UDP-alpha-D-glucose = a 1,2-diacyl-3-O-(beta-D-glucopyranosyl)-sn-glycerol + UDP + H(+). In terms of biological role, glucosyltransferase involved in the biosynthesis of the non-bilayer-forming membrane lipid beta-monoglucosyldiacylglycerol which contributes to regulate the properties and stability of the membrane. Catalyzes the transfer of a glucosyl residue from UDP-Glc to diacylglycerol (DAG) acceptor to form the corresponding beta-glucosyl-DAG (1,2-diacyl-3-O-(beta-D-glucopyranosyl)-sn-glycerol). It can only use UDP-Glc as sugar donor. Two types of DAG (dipalmitoyl-DAG (DPDAG) and 1-oleoyl-2-palmitoyl-DAG (OPDAG)) can be used as sugar acceptors, but OPDAG is preferred. In Synechocystis sp. (strain ATCC 27184 / PCC 6803 / Kazusa), this protein is Beta-monoglucosyldiacylglycerol synthase.